Here is a 332-residue protein sequence, read N- to C-terminus: Glycerol-3-phosphate dehydrogenase [NAD(P)+] (332 aa).

NADPH is bound by residues tryptophan 13, lysine 34, and lysine 108. The sn-glycerol 3-phosphate site is built by lysine 108, glycine 136, and serine 138. Residue alanine 140 participates in NADPH binding. Sn-glycerol 3-phosphate contacts are provided by lysine 191, aspartate 244, serine 254, arginine 255, and asparagine 256. Catalysis depends on lysine 191, which acts as the Proton acceptor. Residue arginine 255 coordinates NADPH. NADPH-binding residues include valine 279 and glutamate 281.

The protein belongs to the NAD-dependent glycerol-3-phosphate dehydrogenase family.

It is found in the cytoplasm. The catalysed reaction is sn-glycerol 3-phosphate + NAD(+) = dihydroxyacetone phosphate + NADH + H(+). It carries out the reaction sn-glycerol 3-phosphate + NADP(+) = dihydroxyacetone phosphate + NADPH + H(+). Its pathway is membrane lipid metabolism; glycerophospholipid metabolism. Catalyzes the reduction of the glycolytic intermediate dihydroxyacetone phosphate (DHAP) to sn-glycerol 3-phosphate (G3P), the key precursor for phospholipid synthesis. This is Glycerol-3-phosphate dehydrogenase [NAD(P)+] from Francisella philomiragia subsp. philomiragia (strain ATCC 25017 / CCUG 19701 / FSC 153 / O#319-036).